The following is a 141-amino-acid chain: Large ribosomal subunit protein uL11 (141 aa).

This sequence belongs to the universal ribosomal protein uL11 family. In terms of assembly, part of the ribosomal stalk of the 50S ribosomal subunit. Interacts with L10 and the large rRNA to form the base of the stalk. L10 forms an elongated spine to which L12 dimers bind in a sequential fashion forming a multimeric L10(L12)X complex. One or more lysine residues are methylated.

Functionally, forms part of the ribosomal stalk which helps the ribosome interact with GTP-bound translation factors. In Alkaliphilus oremlandii (strain OhILAs) (Clostridium oremlandii (strain OhILAs)), this protein is Large ribosomal subunit protein uL11.